The following is a 254-amino-acid chain: Leucyl/phenylalanyl-tRNA--protein transferase (254 aa).

Belongs to the L/F-transferase family.

The protein localises to the cytoplasm. The enzyme catalyses N-terminal L-lysyl-[protein] + L-leucyl-tRNA(Leu) = N-terminal L-leucyl-L-lysyl-[protein] + tRNA(Leu) + H(+). It carries out the reaction N-terminal L-arginyl-[protein] + L-leucyl-tRNA(Leu) = N-terminal L-leucyl-L-arginyl-[protein] + tRNA(Leu) + H(+). The catalysed reaction is L-phenylalanyl-tRNA(Phe) + an N-terminal L-alpha-aminoacyl-[protein] = an N-terminal L-phenylalanyl-L-alpha-aminoacyl-[protein] + tRNA(Phe). Functionally, functions in the N-end rule pathway of protein degradation where it conjugates Leu, Phe and, less efficiently, Met from aminoacyl-tRNAs to the N-termini of proteins containing an N-terminal arginine or lysine. This chain is Leucyl/phenylalanyl-tRNA--protein transferase, found in Burkholderia orbicola (strain MC0-3).